The following is a 261-amino-acid chain: Undecaprenyl-diphosphatase (261 aa).

6 consecutive transmembrane segments (helical) span residues 39–59, 76–96, 99–119, 173–193, 206–226, and 238–258; these read NVLL…LIIF, LLII…KDFF, LFVS…ILWL, AAKF…VLDL, IDLM…YFAV, and LTWF…LQAA.

Belongs to the UppP family.

It localises to the cell membrane. The enzyme catalyses di-trans,octa-cis-undecaprenyl diphosphate + H2O = di-trans,octa-cis-undecaprenyl phosphate + phosphate + H(+). Its function is as follows. Catalyzes the dephosphorylation of undecaprenyl diphosphate (UPP). Confers resistance to bacitracin. The chain is Undecaprenyl-diphosphatase from Carboxydothermus hydrogenoformans (strain ATCC BAA-161 / DSM 6008 / Z-2901).